A 255-amino-acid polypeptide reads, in one-letter code: MAELRVLVAVKRVIDYAVKIRVKPDRTGVVTDGVKHSMNPFCEIAVEEAVRLKEKKLVKEVIAVSCGPAQCQETIRTALAMGADRGIHVEVPPAEAERLGPLQVARVLAKLAEKEKVDLVLLGKQAIDDDCNQTGQMTAGFLDWPQGTFASQVTLEGDKLKVEREIDGGLETLRLKLPAVVTADLRLNEPRYATLPNIMKAKKKKIEVIKPGDLGVDLTSKLSVISVEDPPQRTAGVKVETTEDLVAKLKEIGRI.

Ala2 is subject to N-acetylalanine. AMP is bound by residues Ala9, 39–42 (NPFC), Cys66, and 123–134 (GKQAIDDDCNQT). Residues 183–205 (ADLRLNEPRYATLPNIMKAKKKK) are recognition loop. Lys200 bears the N6,N6,N6-trimethyllysine; by ETFBKMT; alternate mark. Position 200 is an N6-acetyllysine; alternate (Lys200). An N6-methyllysine; alternate modification is found at Lys200. An N6,N6,N6-trimethyllysine; by ETFBKMT modification is found at Lys203. Lys210 is modified (N6-acetyllysine; alternate). Lys210 is modified (N6-succinyllysine; alternate). Ser223 and Ser226 each carry phosphoserine. Lys238 bears the N6-acetyllysine mark. At Lys248 the chain carries N6-acetyllysine; alternate. Lys248 bears the N6-succinyllysine; alternate mark.

Belongs to the ETF beta-subunit/FixA family. Heterodimer composed of ETFA and ETFB. Identified in a complex that contains ETFA, ETFB and ETFRF1. Interacts with ACADM. Methylated. Trimethylation at Lys-200 and Lys-203 may negatively regulate the activity in electron transfer from acyl-CoA dehydrogenases. As to expression, abundant in liver, heart and skeletal muscle. A weak expression is seen in the brain, placenta, lung, kidney and pancreas.

The protein resides in the mitochondrion matrix. Heterodimeric electron transfer flavoprotein that accepts electrons from several mitochondrial dehydrogenases, including acyl-CoA dehydrogenases, glutaryl-CoA and sarcosine dehydrogenase. It transfers the electrons to the main mitochondrial respiratory chain via ETF-ubiquinone oxidoreductase. Required for normal mitochondrial fatty acid oxidation and normal amino acid metabolism. ETFB binds an AMP molecule that probably has a purely structural role. The sequence is that of Electron transfer flavoprotein subunit beta from Homo sapiens (Human).